The chain runs to 60 residues: Ferredoxin (60 aa).

2 4Fe-4S ferredoxin-type domains span residues 2–29 (KVRV…LGDD) and 30–60 (GKAK…SVEE). Residues Cys-10, Cys-13, and Cys-16 each contribute to the [4Fe-4S] cluster site. Residues Cys-20 and Cys-43 are joined by a disulfide bond. Cys-51 contributes to the [4Fe-4S] cluster binding site.

In terms of assembly, monomer. [4Fe-4S] cluster is required as a cofactor.

Its function is as follows. Ferredoxins are iron-sulfur proteins that transfer electrons in a wide variety of metabolic reactions. This chain is Ferredoxin (fdx), found in Thermotoga maritima (strain ATCC 43589 / DSM 3109 / JCM 10099 / NBRC 100826 / MSB8).